Here is a 299-residue protein sequence, read N- to C-terminus: Mitochondrial 2-oxodicarboxylate carrier (299 aa).

Solcar repeat units lie at residues 11 to 100, 107 to 196, and 205 to 294; these read REAS…YKKL, SPAL…VKNM, and LEFW…TYSW. Helical transmembrane passes span 17-37, 70-89, 113-133, 167-187, 205-225, and 277-297; these read IVAG…LDVV, FGFY…KRAV, AIAG…FEVV, GLNK…MVYF, LEFW…SVIN, and LGPG…WLQE.

Belongs to the mitochondrial carrier (TC 2.A.29) family. In terms of tissue distribution, expressed in placenta, gall bladder and colon.

It localises to the mitochondrion inner membrane. The catalysed reaction is 2-oxoadipate(in) + 2-oxoglutarate(out) = 2-oxoadipate(out) + 2-oxoglutarate(in). The enzyme catalyses hexanedioate(in) + 2-oxoglutarate(out) = hexanedioate(out) + 2-oxoglutarate(in). It carries out the reaction L-2-aminoadipate(in) + 2-oxoglutarate(out) = L-2-aminoadipate(out) + 2-oxoglutarate(in). It catalyses the reaction glutarate(in) + 2-oxoglutarate(out) = glutarate(out) + 2-oxoglutarate(in). The catalysed reaction is 2-oxoheptanedioate(in) + 2-oxoglutarate(out) = 2-oxoheptanedioate(out) + 2-oxoglutarate(in). The enzyme catalyses heptanedioate(in) + 2-oxoglutarate(out) = heptanedioate(out) + 2-oxoglutarate(in). It carries out the reaction citrate(in) + 2-oxoglutarate(out) = citrate(out) + 2-oxoglutarate(in). Its function is as follows. Transports dicarboxylates across the inner membranes of mitochondria by a counter-exchange mechanism. Can transport 2-oxoadipate (2-oxohexanedioate), 2-oxoglutarate, adipate (hexanedioate), glutarate, and to a lesser extent, pimelate (heptanedioate), 2-oxopimelate (2-oxoheptanedioate), 2-aminoadipate (2-aminohexanedioate), oxaloacetate, and citrate. Plays a central role in catabolism of lysine, hydroxylysine, and tryptophan, by transporting common metabolite intermediates (such as 2-oxoadipate) into the mitochondria, where it is converted into acetyl-CoA and can enter the citric acid (TCA) cycle. This chain is Mitochondrial 2-oxodicarboxylate carrier (SLC25A21), found in Homo sapiens (Human).